The sequence spans 57 residues: Large ribosomal subunit protein bL32 (57 aa).

Over residues 1–16 (MAVQKSRKTRSKRGMR) the composition is skewed to basic residues. The tract at residues 1–45 (MAVQKSRKTRSKRGMRRSHDALTAPAQLSVDATSGETHRRHHMTA) is disordered.

It belongs to the bacterial ribosomal protein bL32 family.

This is Large ribosomal subunit protein bL32 from Psychromonas ingrahamii (strain DSM 17664 / CCUG 51855 / 37).